We begin with the raw amino-acid sequence, 108 residues long: Transmembrane protein 141 (108 aa).

A run of 2 helical transmembrane segments spans residues 32 to 52 (MKGVFTFVTGTGMAFGLQMFI) and 58 to 78 (YPLQWSLLVAVVAGSVVSYGV).

It belongs to the TMEM141 family.

Its subcellular location is the membrane. The chain is Transmembrane protein 141 (TMEM141) from Homo sapiens (Human).